The primary structure comprises 224 residues: Cytochrome c biogenesis ATP-binding export protein CcmA (224 aa).

The ABC transporter domain occupies 1–220 (MQNAEAAPAL…EYAHAEVVGA (220 aa)). Residue 40 to 47 (GANGSGKT) coordinates ATP.

This sequence belongs to the ABC transporter superfamily. CcmA exporter (TC 3.A.1.107) family. As to quaternary structure, the complex is composed of two ATP-binding proteins (CcmA) and two transmembrane proteins (CcmB).

It is found in the cell inner membrane. The enzyme catalyses heme b(in) + ATP + H2O = heme b(out) + ADP + phosphate + H(+). Functionally, part of the ABC transporter complex CcmAB involved in the biogenesis of c-type cytochromes; once thought to export heme, this seems not to be the case, but its exact role is uncertain. Responsible for energy coupling to the transport system. This is Cytochrome c biogenesis ATP-binding export protein CcmA from Bordetella parapertussis (strain 12822 / ATCC BAA-587 / NCTC 13253).